Reading from the N-terminus, the 945-residue chain is Argonaute protein wago-1 (945 aa).

Positions Met1 to Ala20 are enriched in pro residues. Residues Met1 to Ser41 form a disordered region. The PAZ domain occupies Thr322 to Arg432. The Piwi domain occupies Val636–Lys899.

This sequence belongs to the Argonaute family. WAGO subfamily. Interacts with rde-12. Interacts with znfx-1. In terms of tissue distribution, enriched in sperm and oocytes.

The protein resides in the cytoplasmic granule. Functionally, argonaute protein which is involved in the endogenous small interfering RNA (endo-siRNA) pathway. Interacts with secondary 22G-RNAs, which are RNA-dependent RNA polymerase-derived endo-siRNAs, typically 22 nucleotides in length with a 5'guanosine residue. In the germline, functions in a genome surveillance system to silence transposons and aberrant transcripts. This Caenorhabditis elegans protein is Argonaute protein wago-1.